The following is a 985-amino-acid chain: Alanine--tRNA ligase, mitochondrial (985 aa).

Residues 1–23 constitute a mitochondrion transit peptide; the sequence is MAASVAAAAGRLRRAIGRSCPWQ. ATP-binding positions include arginine 105, histidine 123, tryptophan 205, and 235–237; that span reads LWN. L-alanine contacts are provided by asparagine 237 and aspartate 260. An ATP-binding site is contributed by glycine 264. 4 residues coordinate Zn(2+): histidine 632, histidine 636, cysteine 749, and histidine 753.

This sequence belongs to the class-II aminoacyl-tRNA synthetase family. Monomer. Requires Zn(2+) as cofactor.

It is found in the mitochondrion. It carries out the reaction tRNA(Ala) + L-alanine + ATP = L-alanyl-tRNA(Ala) + AMP + diphosphate. The enzyme catalyses (S)-lactate + ATP + H(+) = (S)-lactoyl-AMP + diphosphate. The catalysed reaction is (S)-lactoyl-AMP + L-lysyl-[protein] = N(6)-[(S)-lactoyl]-L-lysyl-[protein] + AMP + 2 H(+). Catalyzes the attachment of alanine to tRNA(Ala) in a two-step reaction: alanine is first activated by ATP to form Ala-AMP and then transferred to the acceptor end of tRNA(Ala). Also edits incorrectly charged tRNA(Ala) via its editing domain. In presence of high levels of lactate, also acts as a protein lactyltransferase that mediates lactylation of lysine residues in target proteins, such as CGAS. Acts as an inhibitor of cGAS/STING signaling by catalyzing lactylation of CGAS, preventing the formation of liquid-like droplets in which CGAS is activated. The protein is Alanine--tRNA ligase, mitochondrial (Aars2) of Rattus norvegicus (Rat).